A 479-amino-acid polypeptide reads, in one-letter code: MTRVLFAAAEAAPFYKTGGLGDVSMALPRALQAEGIETRVVIPYYPHQMPTEYQQQLVPVTHFTVQVGEHAMYCGIKTLTVAHVQYYLIDNLDYFGREGLYGYWDDGARFAFFQMAVCEMMEQIDYIPDILQLNDWHTAFIPVLLAEKYYWIEAYRDIKTVLTIHNLQFQGVYDPIILDSLFRIGTETYTEAGVAFYDQVNWLKGGINFADAVNTVSPTYAQEIQTPAFGERLDGVLRANRYKLSGILNGIDMQLYDPATDLALTANYSAKDLKPKRQNKRALQRRLGLPVKNMPVLAVVSRLTKQKGIDLLLDALNPFLQQQDVQLIVLGTGDPALERALRTYQSAYPQKVVAAIQFDTQLAQQIYAASDIFLMPSAFEPCGLSQMMAMHYGTLPIVHAVGGLRDTVIPYNRYTGQGTGFSFDDYQPAVLRKIMILAVTLYRQHPLVWRQLQHQAMTCDFGWEHSAQQYRATYQKLMR.

Residue Lys-16 coordinates ADP-alpha-D-glucose.

This sequence belongs to the glycosyltransferase 1 family. Bacterial/plant glycogen synthase subfamily.

It catalyses the reaction [(1-&gt;4)-alpha-D-glucosyl](n) + ADP-alpha-D-glucose = [(1-&gt;4)-alpha-D-glucosyl](n+1) + ADP + H(+). It functions in the pathway glycan biosynthesis; glycogen biosynthesis. Synthesizes alpha-1,4-glucan chains using ADP-glucose. The protein is Glycogen synthase of Lactiplantibacillus plantarum (strain ATCC BAA-793 / NCIMB 8826 / WCFS1) (Lactobacillus plantarum).